Here is a 658-residue protein sequence, read N- to C-terminus: Threonine--tRNA ligase (658 aa).

One can recognise a TGS domain in the interval 1 to 64; it reads MSNTVSLQFP…GASGKVEIIT (64 aa). A catalytic region spans residues 246-548; the sequence is DHRRLGREMD…LIENFAGHMP (303 aa). Zn(2+) contacts are provided by Cys343, His394, and His525.

It belongs to the class-II aminoacyl-tRNA synthetase family. As to quaternary structure, homodimer. The cofactor is Zn(2+).

It localises to the cytoplasm. The catalysed reaction is tRNA(Thr) + L-threonine + ATP = L-threonyl-tRNA(Thr) + AMP + diphosphate + H(+). Its function is as follows. Catalyzes the attachment of threonine to tRNA(Thr) in a two-step reaction: L-threonine is first activated by ATP to form Thr-AMP and then transferred to the acceptor end of tRNA(Thr). Also edits incorrectly charged L-seryl-tRNA(Thr). The chain is Threonine--tRNA ligase from Brucella melitensis biotype 1 (strain ATCC 23456 / CCUG 17765 / NCTC 10094 / 16M).